The following is a 65-amino-acid chain: Large ribosomal subunit protein bL35 (65 aa).

Positions M1–K16 are enriched in basic residues. The tract at residues M1 to S24 is disordered.

Belongs to the bacterial ribosomal protein bL35 family.

The sequence is that of Large ribosomal subunit protein bL35 from Leuconostoc mesenteroides subsp. mesenteroides (strain ATCC 8293 / DSM 20343 / BCRC 11652 / CCM 1803 / JCM 6124 / NCDO 523 / NBRC 100496 / NCIMB 8023 / NCTC 12954 / NRRL B-1118 / 37Y).